Reading from the N-terminus, the 138-residue chain is Putative pre-16S rRNA nuclease (138 aa).

The protein belongs to the YqgF nuclease family.

Its subcellular location is the cytoplasm. In terms of biological role, could be a nuclease involved in processing of the 5'-end of pre-16S rRNA. The sequence is that of Putative pre-16S rRNA nuclease from Klebsiella pneumoniae (strain 342).